The sequence spans 322 residues: Methionyl-tRNA formyltransferase (322 aa).

Serine 112–proline 115 provides a ligand contact to (6S)-5,6,7,8-tetrahydrofolate.

Belongs to the Fmt family.

The enzyme catalyses L-methionyl-tRNA(fMet) + (6R)-10-formyltetrahydrofolate = N-formyl-L-methionyl-tRNA(fMet) + (6S)-5,6,7,8-tetrahydrofolate + H(+). In terms of biological role, attaches a formyl group to the free amino group of methionyl-tRNA(fMet). The formyl group appears to play a dual role in the initiator identity of N-formylmethionyl-tRNA by promoting its recognition by IF2 and preventing the misappropriation of this tRNA by the elongation apparatus. The polypeptide is Methionyl-tRNA formyltransferase (Synechococcus sp. (strain JA-3-3Ab) (Cyanobacteria bacterium Yellowstone A-Prime)).